Consider the following 969-residue polypeptide: Putative zinc protease mug138 (969 aa).

H68 provides a ligand contact to Zn(2+). E71 serves as the catalytic Proton acceptor. Residues H72 and E149 each coordinate Zn(2+).

Belongs to the peptidase M16 family.

It is found in the cytoplasm. Functionally, has a role in meiosis. In Schizosaccharomyces pombe (strain 972 / ATCC 24843) (Fission yeast), this protein is Putative zinc protease mug138 (mug138).